Consider the following 454-residue polypeptide: Chromosomal replication initiator protein DnaA (454 aa).

The domain I, interacts with DnaA modulators stretch occupies residues 1–74 (MFDLDKFWQF…IQEAYAYADM (74 aa)). A domain II region spans residues 74-116 (MEIQPKFEVAGKEGPERLVTPQPRIKTNQEILENRRDEFAQDL). Residues 117 to 333 (QLNSKYTFDT…GALVKVQAHA (217 aa)) are domain III, AAA+ region. Residues glycine 161, glycine 163, lysine 164, and threonine 165 each contribute to the ATP site. Residues 334 to 454 (TIEREDINVD…VYDLKAMLEH (121 aa)) form a domain IV, binds dsDNA region.

It belongs to the DnaA family. Oligomerizes as a right-handed, spiral filament on DNA at oriC.

It localises to the cytoplasm. Plays an essential role in the initiation and regulation of chromosomal replication. ATP-DnaA binds to the origin of replication (oriC) to initiate formation of the DNA replication initiation complex once per cell cycle. Binds the DnaA box (a 9 base pair repeat at the origin) and separates the double-stranded (ds)DNA. Forms a right-handed helical filament on oriC DNA; dsDNA binds to the exterior of the filament while single-stranded (ss)DNA is stabiized in the filament's interior. The ATP-DnaA-oriC complex binds and stabilizes one strand of the AT-rich DNA unwinding element (DUE), permitting loading of DNA polymerase. After initiation quickly degrades to an ADP-DnaA complex that is not apt for DNA replication. Binds acidic phospholipids. This chain is Chromosomal replication initiator protein DnaA, found in Lactobacillus johnsonii (strain CNCM I-12250 / La1 / NCC 533).